The primary structure comprises 504 residues: Cytochrome P450 monooxygenase braC (504 aa).

A helical transmembrane segment spans residues 4 to 24 (LYLPTIWASTLTAATIFIVAV). A heme-binding site is contributed by C448.

Belongs to the cytochrome P450 family. Heme serves as cofactor.

It is found in the membrane. The protein operates within secondary metabolite biosynthesis. Cytochrome P450 monooxygenase; part of the gene cluster that mediates the biosynthesis of the brasilane terpene glycosides brasilane D and E. The biosynthesis starts with the activity of the terpene cyclase braA that converts farnesyl pyrophosphate into the sesquiterpene alcohol trichobrasilenol. Subsequently, trichobrasilenol is glycosylated by the O-glycosyltransferase braB putatively using UDP-GlcNAc as sugar donor to yield brasilane A. The latter then undergoes two rounds of oxidation performed by the cytochrome P450 monooxygenase braC. In the first round braC hydroxylates C-12 forming brasilane D, which serves as substrate in the second round to establish the epoxide at the bond between C-5 and C-10 and oxidize the alcohol at C-12 to an aldehyde leading to the final product brasilane E. This is Cytochrome P450 monooxygenase braC from Annulohypoxylon truncatum (Hypoxylon truncatum).